Reading from the N-terminus, the 356-residue chain is uncharacterized protein (356 aa).

The next 3 helical transmembrane spans lie at 258–275 (SALQ…VFYY), 290–312 (PHWL…TEAL), and 325–347 (LVLL…TLFS).

The protein resides in the cell membrane. This is an uncharacterized protein from Archaeoglobus fulgidus (strain ATCC 49558 / DSM 4304 / JCM 9628 / NBRC 100126 / VC-16).